The chain runs to 613 residues: Dihydroxy-acid dehydratase (613 aa).

Position 81 (Asp81) interacts with Mg(2+). Cys122 lines the [2Fe-2S] cluster pocket. Mg(2+) contacts are provided by Asp123 and Lys124. Lys124 bears the N6-carboxylysine mark. Cys195 lines the [2Fe-2S] cluster pocket. Glu491 is a binding site for Mg(2+). The active-site Proton acceptor is Ser517.

The protein belongs to the IlvD/Edd family. In terms of assembly, homodimer. [2Fe-2S] cluster serves as cofactor. It depends on Mg(2+) as a cofactor.

It catalyses the reaction (2R)-2,3-dihydroxy-3-methylbutanoate = 3-methyl-2-oxobutanoate + H2O. The enzyme catalyses (2R,3R)-2,3-dihydroxy-3-methylpentanoate = (S)-3-methyl-2-oxopentanoate + H2O. The protein operates within amino-acid biosynthesis; L-isoleucine biosynthesis; L-isoleucine from 2-oxobutanoate: step 3/4. Its pathway is amino-acid biosynthesis; L-valine biosynthesis; L-valine from pyruvate: step 3/4. Its function is as follows. Functions in the biosynthesis of branched-chain amino acids. Catalyzes the dehydration of (2R,3R)-2,3-dihydroxy-3-methylpentanoate (2,3-dihydroxy-3-methylvalerate) into 2-oxo-3-methylpentanoate (2-oxo-3-methylvalerate) and of (2R)-2,3-dihydroxy-3-methylbutanoate (2,3-dihydroxyisovalerate) into 2-oxo-3-methylbutanoate (2-oxoisovalerate), the penultimate precursor to L-isoleucine and L-valine, respectively. In Aeromonas salmonicida (strain A449), this protein is Dihydroxy-acid dehydratase.